Here is a 467-residue protein sequence, read N- to C-terminus: Uronate isomerase (467 aa).

Belongs to the metallo-dependent hydrolases superfamily. Uronate isomerase family.

The catalysed reaction is D-glucuronate = D-fructuronate. It catalyses the reaction aldehydo-D-galacturonate = keto-D-tagaturonate. It functions in the pathway carbohydrate metabolism; pentose and glucuronate interconversion. This Flavobacterium johnsoniae (strain ATCC 17061 / DSM 2064 / JCM 8514 / BCRC 14874 / CCUG 350202 / NBRC 14942 / NCIMB 11054 / UW101) (Cytophaga johnsonae) protein is Uronate isomerase.